The primary structure comprises 362 residues: Glutaminase-asparaginase (362 aa).

An N-terminal signal peptide occupies residues 1-25 (MKSALKTFVPGALALLLLFPVAAQA). Residues 35-362 (ANVVILATGG…KELQRMFWEY (328 aa)) enclose the Asparaginase/glutaminase domain. Thr45 functions as the Acyl-ester intermediate in the catalytic mechanism. Residues Ser92 and 125–126 (TD) contribute to the substrate site.

This sequence belongs to the asparaginase 1 family. Homotetramer.

It localises to the periplasm. It carries out the reaction L-glutamine + H2O = L-glutamate + NH4(+). The catalysed reaction is L-asparagine + H2O = L-aspartate + NH4(+). The chain is Glutaminase-asparaginase from Pseudomonas fluorescens biotype A.